Consider the following 313-residue polypeptide: Ribose-phosphate pyrophosphokinase (313 aa).

Residues 37–39 (DGE) and 96–97 (RQ) each bind ATP. Mg(2+) is bound by residues H131 and D170. The active site involves K193. D-ribose 5-phosphate-binding positions include R195, D219, and 223–227 (DTAGT).

The protein belongs to the ribose-phosphate pyrophosphokinase family. Class I subfamily. Homohexamer. Mg(2+) is required as a cofactor.

Its subcellular location is the cytoplasm. The enzyme catalyses D-ribose 5-phosphate + ATP = 5-phospho-alpha-D-ribose 1-diphosphate + AMP + H(+). The protein operates within metabolic intermediate biosynthesis; 5-phospho-alpha-D-ribose 1-diphosphate biosynthesis; 5-phospho-alpha-D-ribose 1-diphosphate from D-ribose 5-phosphate (route I): step 1/1. Functionally, involved in the biosynthesis of the central metabolite phospho-alpha-D-ribosyl-1-pyrophosphate (PRPP) via the transfer of pyrophosphoryl group from ATP to 1-hydroxyl of ribose-5-phosphate (Rib-5-P). This chain is Ribose-phosphate pyrophosphokinase, found in Pseudomonas aeruginosa (strain ATCC 15692 / DSM 22644 / CIP 104116 / JCM 14847 / LMG 12228 / 1C / PRS 101 / PAO1).